Reading from the N-terminus, the 320-residue chain is Beta-ketoacyl-[acyl-carrier-protein] synthase III (320 aa).

Active-site residues include C112 and H245. The segment at 246–250 (QANIR) is ACP-binding. N275 is a catalytic residue.

This sequence belongs to the thiolase-like superfamily. FabH family. As to quaternary structure, homodimer.

It localises to the cytoplasm. The enzyme catalyses malonyl-[ACP] + acetyl-CoA + H(+) = 3-oxobutanoyl-[ACP] + CO2 + CoA. Its pathway is lipid metabolism; fatty acid biosynthesis. Its function is as follows. Catalyzes the condensation reaction of fatty acid synthesis by the addition to an acyl acceptor of two carbons from malonyl-ACP. Catalyzes the first condensation reaction which initiates fatty acid synthesis and may therefore play a role in governing the total rate of fatty acid production. Possesses both acetoacetyl-ACP synthase and acetyl transacylase activities. Its substrate specificity determines the biosynthesis of branched-chain and/or straight-chain of fatty acids. In Streptococcus thermophilus (strain ATCC BAA-250 / LMG 18311), this protein is Beta-ketoacyl-[acyl-carrier-protein] synthase III.